We begin with the raw amino-acid sequence, 231 residues long: Protein OPG061 (231 aa).

This sequence belongs to the orthopoxvirus OPG058 family.

It is found in the host nucleus. The protein resides in the host nucleolus. The sequence is that of Protein OPG061 (OPG061) from Vaccinia virus (strain L-IVP) (VACV).